The sequence spans 367 residues: Anthranilate phosphoribosyltransferase (367 aa).

A compositionally biased stretch (low complexity) spans 1–17; it reads MVLSSEASSAADHSAAA. The segment at 1–22 is disordered; it reads MVLSSEASSAADHSAAAPIPTS. Residues Gly-104, 107–108, Thr-112, 114–117, 132–140, and Gly-144 contribute to the 5-phospho-alpha-D-ribose 1-diphosphate site; these read GD, NLST, and KHGNRAASS. Gly-104 provides a ligand contact to anthranilate. Ser-116 is a binding site for Mg(2+). Asn-135 contacts anthranilate. Residue Arg-190 coordinates anthranilate. 2 residues coordinate Mg(2+): Asp-248 and Glu-249.

This sequence belongs to the anthranilate phosphoribosyltransferase family. As to quaternary structure, homodimer. Mg(2+) is required as a cofactor.

The enzyme catalyses N-(5-phospho-beta-D-ribosyl)anthranilate + diphosphate = 5-phospho-alpha-D-ribose 1-diphosphate + anthranilate. The protein operates within amino-acid biosynthesis; L-tryptophan biosynthesis; L-tryptophan from chorismate: step 2/5. Its function is as follows. Catalyzes the transfer of the phosphoribosyl group of 5-phosphorylribose-1-pyrophosphate (PRPP) to anthranilate to yield N-(5'-phosphoribosyl)-anthranilate (PRA). The chain is Anthranilate phosphoribosyltransferase from Mycobacterium ulcerans (strain Agy99).